The following is a 364-amino-acid chain: DNA polymerase IV (364 aa).

One can recognise a UmuC domain in the interval 6–194 (VFHIDFDYFY…LKIRDIPGIG (189 aa)). Residues Asp-10 and Asp-111 each coordinate Mg(2+). The active site involves Glu-112.

It belongs to the DNA polymerase type-Y family. Monomer. Mg(2+) is required as a cofactor.

The protein resides in the cytoplasm. It carries out the reaction DNA(n) + a 2'-deoxyribonucleoside 5'-triphosphate = DNA(n+1) + diphosphate. In terms of biological role, poorly processive, error-prone DNA polymerase involved in untargeted mutagenesis. Copies undamaged DNA at stalled replication forks, which arise in vivo from mismatched or misaligned primer ends. These misaligned primers can be extended by PolIV. Exhibits no 3'-5' exonuclease (proofreading) activity. May be involved in translesional synthesis. This chain is DNA polymerase IV, found in Nitrosopumilus maritimus (strain SCM1).